Reading from the N-terminus, the 635-residue chain is MQDNNRNLILAMVLSALVMLVWSIFFAPEPVPPAQDTPAASTQGTAQPEAGGPATPGAVPQGAAPELEAAAASSDPSANAGRVAIESSSLAGTISLAGGRIDDLELTGYRETLDTRSPFVRLLSPTAQTTVQAEGSPVAPGGGAELAVQKPYYAVYGWMPAAGTDPALVPGPATVWEVESGAKLGPGQPVTLRWDNGAGQIFRRTYELDDKFLFTVTQTLENTGTAPFSAAPYGILARHGKPDTQNFFVLHEGAVGMTDGKLLEKKYKDMTKLDPLPGEGPAELVEVQENGWIGFTDKYWMTTLAPAPGQSFTAVAKYAPGADIYQTEARMPVQTVAPGATGTSSSYLFAGAKVWEVINGYQTNPGIDRFVDSIDWGWFYFLTKPIFRLLHWLHGMIGNMGWAIIALTFVLKLLVFPLARKSYISMAKMKELQPQMEAIKERTGDDRMKFQKEVMELYKREKVNPAAGCLPVLLQIPIFFALYKVIFVTIELRHAPWIGWIRDLAAPDPSSLWNLFGLLPWAAPGQGSFLHSFTLPVLAILLGVSMWMQQKLNPAPTDPAQKMIFAWMPWVFMFMLGGFASGLVLYWITNNTITIIQQYTIMSMHGHRPDFFGNIRSSLPSRAKAGDKGGDKGGK.

Residues 8-28 traverse the membrane as a helical segment; sequence LILAMVLSALVMLVWSIFFAP. A disordered region spans residues 33 to 61; it reads PAQDTPAASTQGTAQPEAGGPATPGAVPQ. Helical transmembrane passes span 396 to 416, 470 to 490, 528 to 548, and 564 to 584; these read MIGNMGWAIIALTFVLKLLVF, LPVLLQIPIFFALYKVIFVTI, SFLHSFTLPVLAILLGVSMWM, and IFAWMPWVFMFMLGGFASGLV. The interval 615-635 is disordered; it reads IRSSLPSRAKAGDKGGDKGGK. Positions 624 to 635 are enriched in basic and acidic residues; the sequence is KAGDKGGDKGGK.

The protein belongs to the OXA1/ALB3/YidC family. Type 1 subfamily. Interacts with the Sec translocase complex via SecD. Specifically interacts with transmembrane segments of nascent integral membrane proteins during membrane integration.

It localises to the cell inner membrane. Functionally, required for the insertion and/or proper folding and/or complex formation of integral membrane proteins into the membrane. Involved in integration of membrane proteins that insert both dependently and independently of the Sec translocase complex, as well as at least some lipoproteins. Aids folding of multispanning membrane proteins. The polypeptide is Membrane protein insertase YidC (Paracoccus denitrificans (strain Pd 1222)).